Reading from the N-terminus, the 196-residue chain is Nucleoside triphosphate pyrophosphatase (196 aa).

Residue Asp-73 is the Proton acceptor of the active site.

The protein belongs to the Maf family. A divalent metal cation is required as a cofactor.

Its subcellular location is the cytoplasm. The catalysed reaction is a ribonucleoside 5'-triphosphate + H2O = a ribonucleoside 5'-phosphate + diphosphate + H(+). It carries out the reaction a 2'-deoxyribonucleoside 5'-triphosphate + H2O = a 2'-deoxyribonucleoside 5'-phosphate + diphosphate + H(+). Its function is as follows. Nucleoside triphosphate pyrophosphatase. May have a dual role in cell division arrest and in preventing the incorporation of modified nucleotides into cellular nucleic acids. This chain is Nucleoside triphosphate pyrophosphatase, found in Maricaulis maris (strain MCS10) (Caulobacter maris).